We begin with the raw amino-acid sequence, 443 residues long: D-inositol 3-phosphate glycosyltransferase (443 aa).

H26 contacts 1D-myo-inositol 3-phosphate. Residues 32–33 and G40 each bind UDP-N-acetyl-alpha-D-glucosamine; that span reads QP. Residues 37–42, K95, Y128, T152, and R172 contribute to the 1D-myo-inositol 3-phosphate site; that span reads DAGGMN. Residues R246, K251, and Q304 each coordinate UDP-N-acetyl-alpha-D-glucosamine. Y313, R314, and A316 together coordinate Mg(2+). 2 residues coordinate UDP-N-acetyl-alpha-D-glucosamine: E326 and E334. T340 provides a ligand contact to Mg(2+).

Belongs to the glycosyltransferase group 1 family. MshA subfamily. As to quaternary structure, homodimer.

It carries out the reaction 1D-myo-inositol 3-phosphate + UDP-N-acetyl-alpha-D-glucosamine = 1D-myo-inositol 2-acetamido-2-deoxy-alpha-D-glucopyranoside 3-phosphate + UDP + H(+). Functionally, catalyzes the transfer of a N-acetyl-glucosamine moiety to 1D-myo-inositol 3-phosphate to produce 1D-myo-inositol 2-acetamido-2-deoxy-glucopyranoside 3-phosphate in the mycothiol biosynthesis pathway. The polypeptide is D-inositol 3-phosphate glycosyltransferase (Mycobacteroides abscessus (strain ATCC 19977 / DSM 44196 / CCUG 20993 / CIP 104536 / JCM 13569 / NCTC 13031 / TMC 1543 / L948) (Mycobacterium abscessus)).